The following is a 663-amino-acid chain: Cyclic nucleotide-gated channel alpha-2 (663 aa).

Residues 1 to 61 (MTEKANGVKS…QLAEMDAPQQ (61 aa)) form a disordered region. The Cytoplasmic portion of the chain corresponds to 1–144 (MTEKANGVKS…PAGDWYYRWL (144 aa)). Positions 12–23 (PANNHNHHAPPA) are enriched in low complexity. A helical transmembrane segment spans residues 145–166 (FLIALPVLYNWCLLVARACFSD). Residues 167-176 (LQKGYYIVWL) are Extracellular-facing. The helical transmembrane segment at 177 to 197 (VLDYVSDVVYIADLFIRLRTG) threads the bilayer. At 198 to 222 (FLEQGLLVKDTKKLRDNYIHTMQFK) the chain is on the cytoplasmic side. A helical membrane pass occupies residues 223-241 (LDVASIIPTDLIYFAVGIH). Topologically, residues 242–246 (NPEVR) are extracellular. A helical membrane pass occupies residues 247 to 265 (FNRLLHFARMFEFFDRTET). Topologically, residues 266–272 (RTSYPNI) are cytoplasmic. Residues 270–378 (PNIFRISNLI…GNVGSMISNM (109 aa)) are ion conduction pathway. The helical transmembrane segment at 273–296 (FRISNLILYILIIIHWNACIYYAI) threads the bilayer. Topologically, residues 297 to 319 (SKSIGFGVDTWVYPNITDPEYGY) are extracellular. The next 2 membrane-spanning stretches (helical) occupy residues 320–354 (LSREYIYCLYWSTLTLTTIGETPPPVKDEEYLFVI) and 355–379 (FDFLIGVLIFATIVGNVGSMISNMN). Positions 337 to 340 (TIGE) are selectivity filter. Residues 380 to 456 (ATRAEFQAKI…STLKKVRIFQ (77 aa)) are C-linker. Residues 380 to 663 (ATRAEFQAKI…NSPEPPAEKP (284 aa)) lie on the Cytoplasmic side of the membrane. Positions 460-580 (AGLLVELVLK…EERGREILMK (121 aa)) are cyclic nucleotide-binding domain. The 3',5'-cyclic GMP site is built by G520, S523, R536, and T537. Positions 536 and 537 each coordinate 3',5'-cyclic AMP. A coiled-coil region spans residues 597-651 (VQEKLEQLETNMDTLYTRFARLLAEYTGAQQKLKQRITVLETKMKQNNEDDSLSD). Residues 640–663 (MKQNNEDDSLSDGMNSPEPPAEKP) are disordered.

This sequence belongs to the cyclic nucleotide-gated cation channel (TC 1.A.1.5) family. CNGA2 subfamily. In terms of assembly, the olfactory cyclic nucleotide-gated channel is an heterotetramer composed of CNGA2, CNGA4 and CNGB1b subunits with 2:1:1 stoichiometry. As to expression, olfactory neurons.

The protein resides in the cell projection. Its subcellular location is the cilium membrane. The enzyme catalyses Ca(2+)(in) = Ca(2+)(out). The catalysed reaction is Na(+)(in) = Na(+)(out). It catalyses the reaction K(+)(in) = K(+)(out). It carries out the reaction NH4(+)(in) = NH4(+)(out). The enzyme catalyses Rb(+)(in) = Rb(+)(out). The catalysed reaction is Li(+)(in) = Li(+)(out). It catalyses the reaction Cs(+)(in) = Cs(+)(out). Its function is as follows. Pore-forming subunit of the olfactory cyclic nucleotide-gated channel. Operates in the cilia of olfactory sensory neurons where chemical stimulation of the odorant is converted to an electrical signal. Mediates odorant-induced cAMP-dependent Ca(2+) influx triggering neuron depolarization. The rise of intracellular Ca(2+) levels potentiates the olfactory response by activating Ca(2+)-dependent Cl(-) channels, but it also serves as a negative feedback signal to desensitize the channel for rapid adaptation to odorants. Conducts cAMP- and cGMP-gated ion currents, with permeability for monovalent and divalent cations. In Bos taurus (Bovine), this protein is Cyclic nucleotide-gated channel alpha-2.